The primary structure comprises 353 residues: Photosystem II D2 protein (353 aa).

Position 2 is an N-acetylthreonine (Thr2). At Thr2 the chain carries Phosphothreonine. The chain crosses the membrane as a helical span at residues 41-61 (CAYFSLGGWLTGTTFVTSWYT). Residue His118 coordinates chlorophyll a. Residues 125–141 (GFMLRQFELARSVQLRP) form a helical membrane-spanning segment. Gln130 and Asn143 together coordinate pheophytin a. Residues 153 to 166 (VFVSVFLIYPLGQS) traverse the membrane as a helical segment. His198 is a chlorophyll a binding site. A helical transmembrane segment spans residues 208–228 (AALLCAIHGATVENTLFEDGD). A plastoquinone-binding residues include His215 and Phe262. His215 provides a ligand contact to Fe cation. Position 269 (His269) interacts with Fe cation. The helical transmembrane segment at 279 to 295 (GLWMSAIGVVGLALNLR) threads the bilayer.

The protein belongs to the reaction center PufL/M/PsbA/D family. As to quaternary structure, PSII is composed of 1 copy each of membrane proteins PsbA, PsbB, PsbC, PsbD, PsbE, PsbF, PsbH, PsbI, PsbJ, PsbK, PsbL, PsbM, PsbT, PsbX, PsbY, PsbZ, Psb30/Ycf12, at least 3 peripheral proteins of the oxygen-evolving complex and a large number of cofactors. It forms dimeric complexes. It depends on The D1/D2 heterodimer binds P680, chlorophylls that are the primary electron donor of PSII, and subsequent electron acceptors. It shares a non-heme iron and each subunit binds pheophytin, quinone, additional chlorophylls, carotenoids and lipids. There is also a Cl(-1) ion associated with D1 and D2, which is required for oxygen evolution. The PSII complex binds additional chlorophylls, carotenoids and specific lipids. as a cofactor.

The protein localises to the plastid. Its subcellular location is the chloroplast thylakoid membrane. It carries out the reaction 2 a plastoquinone + 4 hnu + 2 H2O = 2 a plastoquinol + O2. Its function is as follows. Photosystem II (PSII) is a light-driven water:plastoquinone oxidoreductase that uses light energy to abstract electrons from H(2)O, generating O(2) and a proton gradient subsequently used for ATP formation. It consists of a core antenna complex that captures photons, and an electron transfer chain that converts photonic excitation into a charge separation. The D1/D2 (PsbA/PsbD) reaction center heterodimer binds P680, the primary electron donor of PSII as well as several subsequent electron acceptors. D2 is needed for assembly of a stable PSII complex. The protein is Photosystem II D2 protein of Chara vulgaris (Common stonewort).